We begin with the raw amino-acid sequence, 263 residues long: 3-methyl-2-oxobutanoate hydroxymethyltransferase (263 aa).

Asp-43 and Asp-82 together coordinate Mg(2+). 3-methyl-2-oxobutanoate-binding positions include 43 to 44 (DS), Asp-82, and Lys-111. Position 113 (Glu-113) interacts with Mg(2+). Glu-179 (proton acceptor) is an active-site residue.

The protein belongs to the PanB family. In terms of assembly, homodecamer; pentamer of dimers. Requires Mg(2+) as cofactor.

It is found in the cytoplasm. The enzyme catalyses 3-methyl-2-oxobutanoate + (6R)-5,10-methylene-5,6,7,8-tetrahydrofolate + H2O = 2-dehydropantoate + (6S)-5,6,7,8-tetrahydrofolate. Its pathway is cofactor biosynthesis; (R)-pantothenate biosynthesis; (R)-pantoate from 3-methyl-2-oxobutanoate: step 1/2. Its function is as follows. Catalyzes the reversible reaction in which hydroxymethyl group from 5,10-methylenetetrahydrofolate is transferred onto alpha-ketoisovalerate to form ketopantoate. The sequence is that of 3-methyl-2-oxobutanoate hydroxymethyltransferase from Neisseria meningitidis serogroup A / serotype 4A (strain DSM 15465 / Z2491).